Reading from the N-terminus, the 1053-residue chain is Carbamoyl phosphate synthase large chain (1053 aa).

The segment at 1–397 (MPKRTDIKKV…SFMKAKRSID (397 aa)) is carboxyphosphate synthetic domain. Residues R127, R167, G173, G174, E206, V208, E213, G239, I240, H241, Q282, and E294 each coordinate ATP. Residues 131–323 (RDLMNEIGEP…IARVAAKIAI (193 aa)) form the ATP-grasp 1 domain. Positions 282, 294, and 296 each coordinate Mg(2+). 3 residues coordinate Mn(2+): Q282, E294, and N296. The interval 398 to 530 (TDVRTHTSPS…YSTREGTSEI (133 aa)) is oligomerization domain. Residues 531-919 (VRDKKQKILI…YKACISADNE (389 aa)) form a carbamoyl phosphate synthetic domain region. The 192-residue stretch at 661-852 (SVLLTTLQIP…IAKIAAKVMI (192 aa)) folds into the ATP-grasp 2 domain. Residues R697, S736, L738, E743, G768, I769, H770, S771, Q811, and E823 each contribute to the ATP site. Q811, E823, and N825 together coordinate Mg(2+). 3 residues coordinate Mn(2+): Q811, E823, and N825. In terms of domain architecture, MGS-like spans 918-1053 (NELPLKGNVF…TLEPLSHYLR (136 aa)). The allosteric domain stretch occupies residues 920 to 1053 (LPLKGNVFVS…TLEPLSHYLR (134 aa)).

This sequence belongs to the CarB family. In terms of assembly, composed of two chains; the small (or glutamine) chain promotes the hydrolysis of glutamine to ammonia, which is used by the large (or ammonia) chain to synthesize carbamoyl phosphate. Tetramer of heterodimers (alpha,beta)4. Mg(2+) is required as a cofactor. Mn(2+) serves as cofactor.

The catalysed reaction is hydrogencarbonate + L-glutamine + 2 ATP + H2O = carbamoyl phosphate + L-glutamate + 2 ADP + phosphate + 2 H(+). It carries out the reaction hydrogencarbonate + NH4(+) + 2 ATP = carbamoyl phosphate + 2 ADP + phosphate + 2 H(+). The protein operates within amino-acid biosynthesis; L-arginine biosynthesis; carbamoyl phosphate from bicarbonate: step 1/1. It functions in the pathway pyrimidine metabolism; UMP biosynthesis via de novo pathway; (S)-dihydroorotate from bicarbonate: step 1/3. In terms of biological role, large subunit of the glutamine-dependent carbamoyl phosphate synthetase (CPSase). CPSase catalyzes the formation of carbamoyl phosphate from the ammonia moiety of glutamine, carbonate, and phosphate donated by ATP, constituting the first step of 2 biosynthetic pathways, one leading to arginine and/or urea and the other to pyrimidine nucleotides. The large subunit (synthetase) binds the substrates ammonia (free or transferred from glutamine from the small subunit), hydrogencarbonate and ATP and carries out an ATP-coupled ligase reaction, activating hydrogencarbonate by forming carboxy phosphate which reacts with ammonia to form carbamoyl phosphate. This Methanoregula boonei (strain DSM 21154 / JCM 14090 / 6A8) protein is Carbamoyl phosphate synthase large chain.